The chain runs to 181 residues: dTDP-4-dehydrorhamnose 3,5-epimerase (181 aa).

Substrate contacts are provided by residues R23, E28, Q47–N49, and R59. Residue H62 is the Proton acceptor of the active site. Residues K72 and H119 each contribute to the substrate site. Y132 acts as the Proton donor in catalysis. E143 and K167 together coordinate substrate.

This sequence belongs to the dTDP-4-dehydrorhamnose 3,5-epimerase family. Homodimer.

It catalyses the reaction dTDP-4-dehydro-6-deoxy-alpha-D-glucose = dTDP-4-dehydro-beta-L-rhamnose. The protein operates within carbohydrate biosynthesis; dTDP-L-rhamnose biosynthesis. Its pathway is bacterial outer membrane biogenesis; LPS O-antigen biosynthesis. In terms of biological role, catalyzes the epimerization of the C3' and C5'positions of dTDP-6-deoxy-D-xylo-4-hexulose, forming dTDP-6-deoxy-L-lyxo-4-hexulose. The polypeptide is dTDP-4-dehydrorhamnose 3,5-epimerase (rfbC) (Shigella flexneri).